Here is a 601-residue protein sequence, read N- to C-terminus: Deuterosome assembly protein 1 (601 aa).

Coiled-coil stretches lie at residues 14 to 59, 86 to 196, and 226 to 277; these read CEAE…NAQT, TQNY…GKKQ, and IEKL…ELQS. The tract at residues 305-329 is disordered; that stretch reads AQDNRKRVESSYSPSPKEAERKRKE. The stretch at 354-397 forms a coiled coil; the sequence is EEGLCSEQERLRSEISELTQELHQKEVTIATVMKKAALLERQLK. Residue Ser-544 is modified to Phosphoserine. Residues 555-586 adopt a coiled-coil conformation; it reads AAQHFLMEEERRAKELEKLLNTHIDELQRHTE.

The protein belongs to the CEP63 family. Interacts with CEP152; the interaction is mutually exclusive with CEP63. As to expression, highly enriched in multicilia-abundant tissues (trachea and oviduct).

The protein resides in the cytoplasm. Key structural component of the deuterosome, a structure that promotes de novo centriole amplification in multiciliated cells. Deuterosome-mediated centriole amplification occurs in terminally differentiated multiciliated cells and can generate more than 100 centrioles. Probably sufficient for the specification and formation of the deuterosome inner core. Interacts with CEP152 and recruits PLK4 to activate centriole biogenesis. This Mus musculus (Mouse) protein is Deuterosome assembly protein 1.